The primary structure comprises 128 residues: Aspartate 1-decarboxylase (128 aa).

Catalysis depends on Ser-25, which acts as the Schiff-base intermediate with substrate; via pyruvic acid. Ser-25 is subject to Pyruvic acid (Ser). Thr-57 contributes to the substrate binding site. Residue Tyr-58 is the Proton donor of the active site. 73–75 contacts substrate; sequence GSA.

This sequence belongs to the PanD family. As to quaternary structure, heterooctamer of four alpha and four beta subunits. Pyruvate serves as cofactor. Post-translationally, is synthesized initially as an inactive proenzyme, which is activated by self-cleavage at a specific serine bond to produce a beta-subunit with a hydroxyl group at its C-terminus and an alpha-subunit with a pyruvoyl group at its N-terminus.

It is found in the cytoplasm. It carries out the reaction L-aspartate + H(+) = beta-alanine + CO2. It participates in cofactor biosynthesis; (R)-pantothenate biosynthesis; beta-alanine from L-aspartate: step 1/1. In terms of biological role, catalyzes the pyruvoyl-dependent decarboxylation of aspartate to produce beta-alanine. In Burkholderia lata (strain ATCC 17760 / DSM 23089 / LMG 22485 / NCIMB 9086 / R18194 / 383), this protein is Aspartate 1-decarboxylase.